We begin with the raw amino-acid sequence, 689 residues long: DNA ligase (689 aa).

NAD(+)-binding positions include Asp40–Asp44, Ser89–Leu90, and Glu121. Residue Lys123 is the N6-AMP-lysine intermediate of the active site. Arg144, Glu179, Lys295, and Lys319 together coordinate NAD(+). Cys413, Cys416, Cys431, and Cys437 together coordinate Zn(2+). The BRCT domain maps to Lys610 to Val689.

This sequence belongs to the NAD-dependent DNA ligase family. LigA subfamily. It depends on Mg(2+) as a cofactor. Requires Mn(2+) as cofactor.

The enzyme catalyses NAD(+) + (deoxyribonucleotide)n-3'-hydroxyl + 5'-phospho-(deoxyribonucleotide)m = (deoxyribonucleotide)n+m + AMP + beta-nicotinamide D-nucleotide.. DNA ligase that catalyzes the formation of phosphodiester linkages between 5'-phosphoryl and 3'-hydroxyl groups in double-stranded DNA using NAD as a coenzyme and as the energy source for the reaction. It is essential for DNA replication and repair of damaged DNA. The chain is DNA ligase from Rickettsia canadensis (strain McKiel).